We begin with the raw amino-acid sequence, 728 residues long: 1,4-alpha-glucan branching enzyme GlgB (728 aa).

Asp405 (nucleophile) is an active-site residue. The active-site Proton donor is the Glu458.

Belongs to the glycosyl hydrolase 13 family. GlgB subfamily. In terms of assembly, monomer.

It carries out the reaction Transfers a segment of a (1-&gt;4)-alpha-D-glucan chain to a primary hydroxy group in a similar glucan chain.. The protein operates within glycan biosynthesis; glycogen biosynthesis. Its function is as follows. Catalyzes the formation of the alpha-1,6-glucosidic linkages in glycogen by scission of a 1,4-alpha-linked oligosaccharide from growing alpha-1,4-glucan chains and the subsequent attachment of the oligosaccharide to the alpha-1,6 position. The polypeptide is 1,4-alpha-glucan branching enzyme GlgB (Shigella flexneri).